The sequence spans 217 residues: Phosphoenolpyruvate guanylyltransferase (217 aa).

Residues Thr-150, Gly-165, and Ser-168 each contribute to the phosphoenolpyruvate site.

Belongs to the CofC family.

The catalysed reaction is phosphoenolpyruvate + GTP + H(+) = enolpyruvoyl-2-diphospho-5'-guanosine + diphosphate. Its pathway is cofactor biosynthesis; coenzyme F420 biosynthesis. Guanylyltransferase that catalyzes the activation of phosphoenolpyruvate (PEP) as enolpyruvoyl-2-diphospho-5'-guanosine, via the condensation of PEP with GTP. It is involved in the biosynthesis of coenzyme F420, a hydride carrier cofactor. This chain is Phosphoenolpyruvate guanylyltransferase, found in Mycobacterium marinum (strain ATCC BAA-535 / M).